A 292-amino-acid polypeptide reads, in one-letter code: Ribosomal protein L11 methyltransferase (292 aa).

S-adenosyl-L-methionine-binding residues include Thr-144, Gly-165, Asp-187, and Asn-229.

This sequence belongs to the methyltransferase superfamily. PrmA family.

The protein resides in the cytoplasm. It carries out the reaction L-lysyl-[protein] + 3 S-adenosyl-L-methionine = N(6),N(6),N(6)-trimethyl-L-lysyl-[protein] + 3 S-adenosyl-L-homocysteine + 3 H(+). In terms of biological role, methylates ribosomal protein L11. The polypeptide is Ribosomal protein L11 methyltransferase (Pseudomonas fluorescens (strain ATCC BAA-477 / NRRL B-23932 / Pf-5)).